The sequence spans 385 residues: MKFPSFLSLGIAASTTALAALPDQKPIGDTIADVHLGKFLIELAPGDTRWVTEEEKWGLKRDGRKFFDITAEVEQNLFPRAFAKTAVTFPTDLHRTVEVMPLAAQLSKDNMFSHLTTFTSFHTRYYKSETGIQSATWLMKQIQKTISSSPASNARVEKFEHPWGQFSIIATVPGQSNKTVVIGAHQDSINMFLPSILAAPGADDDGSGTVTILEAFRVLLQSEAIAQGNATNTVEFHWYSAEEGGLLGSQAVFSKYKQDNKDIRAMLQQDMTGYSKGTLDAGELESVGVITDFVDEGLTEFIKKVVNGYCDIPFVLTECGYACSDHASASRFGYPSAFVIESKFEHSSQHIHTGQDTIETLDFNHMLQHAKMTLGLAYELAFADI.

The signal sequence occupies residues 1–19 (MKFPSFLSLGIAASTTALA). The propeptide occupies 20-87 (ALPDQKPIGD…FPRAFAKTAV (68 aa)). Asn-177 carries N-linked (GlcNAc...) asparagine glycosylation. Zn(2+) contacts are provided by His-185 and Asp-204. N-linked (GlcNAc...) asparagine glycosylation occurs at Asn-229. Residues Glu-243 and Asp-270 each coordinate Zn(2+). A disulfide bridge connects residues Cys-319 and Cys-323. Position 352 (His-352) interacts with Zn(2+).

Belongs to the peptidase M28 family. M28E subfamily. Monomer. Zn(2+) serves as cofactor.

Its subcellular location is the secreted. Extracellular aminopeptidase that allows assimilation of proteinaceous substrates. In Blastomyces gilchristii (strain SLH14081) (Blastomyces dermatitidis), this protein is Leucine aminopeptidase 1 (LAP1).